We begin with the raw amino-acid sequence, 664 residues long: RBBP8 N-terminal-like protein (664 aa).

The segment covering 125–140 (LRGLGDRPKPRAKEGT) has biased composition (basic and acidic residues). Disordered stretches follow at residues 125 to 284 (LRGL…KLSP) and 369 to 664 (RAGS…WEET). Residues 241 to 255 (GTPPPLPARSSPPSP) show a composition bias toward pro residues. Over residues 437-454 (ALDKPLDLSEWGRARGQD) the composition is skewed to basic and acidic residues. A compositionally biased stretch (polar residues) spans 481–496 (SGPLTRSPQALSNGTK). Low complexity predominate over residues 516-528 (LPGSQLSLSSPGS). A compositionally biased stretch (pro residues) spans 537–552 (PLPPPHPQPPPHPQPP). A compositionally biased stretch (basic and acidic residues) spans 554–570 (LDGHPEPSKAEVLRPES). The segment covering 584 to 597 (GLSSQAEATTSTTG) has biased composition (polar residues). Residues 628–637 (KKPSRGRRKL) are compositionally biased toward basic residues. Over residues 654–664 (PSPNSSPWEET) the composition is skewed to polar residues.

The chain is RBBP8 N-terminal-like protein (RBBP8NL) from Homo sapiens (Human).